Reading from the N-terminus, the 362-residue chain is Biotin synthase (362 aa).

The region spanning 46 to 273 (NEVQVSTLLS…ASHVRLSAGR (228 aa)) is the Radical SAM core domain. [4Fe-4S] cluster is bound by residues Cys61, Cys65, and Cys68. The [2Fe-2S] cluster site is built by Cys105, Cys136, Cys196, and Arg268.

Belongs to the radical SAM superfamily. Biotin synthase family. In terms of assembly, homodimer. [4Fe-4S] cluster is required as a cofactor. It depends on [2Fe-2S] cluster as a cofactor.

The enzyme catalyses (4R,5S)-dethiobiotin + (sulfur carrier)-SH + 2 reduced [2Fe-2S]-[ferredoxin] + 2 S-adenosyl-L-methionine = (sulfur carrier)-H + biotin + 2 5'-deoxyadenosine + 2 L-methionine + 2 oxidized [2Fe-2S]-[ferredoxin]. The protein operates within cofactor biosynthesis; biotin biosynthesis; biotin from 7,8-diaminononanoate: step 2/2. In terms of biological role, catalyzes the conversion of dethiobiotin (DTB) to biotin by the insertion of a sulfur atom into dethiobiotin via a radical-based mechanism. The sequence is that of Biotin synthase from Aeromonas salmonicida (strain A449).